The primary structure comprises 886 residues: DNA gyrase subunit A (886 aa).

Positions 35-501 (LPDVRDGLKP…GFEDLEDEDL (467 aa)) constitute a Topo IIA-type catalytic domain. Catalysis depends on Tyr123, which acts as the O-(5'-phospho-DNA)-tyrosine intermediate. The GyrA-box signature appears at 528–534 (QNRGGRG). Residues 810–860 (VKEDADEENEDEQSTVSEDGTEQQREAVVNDETPGNAIHTEVIDSEVNDED) form a disordered region. Positions 813-822 (DADEENEDEQ) are enriched in acidic residues.

The protein belongs to the type II topoisomerase GyrA/ParC subunit family. In terms of assembly, heterotetramer, composed of two GyrA and two GyrB chains. In the heterotetramer, GyrA contains the active site tyrosine that forms a transient covalent intermediate with DNA, while GyrB binds cofactors and catalyzes ATP hydrolysis.

The protein resides in the cytoplasm. It carries out the reaction ATP-dependent breakage, passage and rejoining of double-stranded DNA.. In terms of biological role, a type II topoisomerase that negatively supercoils closed circular double-stranded (ds) DNA in an ATP-dependent manner to modulate DNA topology and maintain chromosomes in an underwound state. Negative supercoiling favors strand separation, and DNA replication, transcription, recombination and repair, all of which involve strand separation. Also able to catalyze the interconversion of other topological isomers of dsDNA rings, including catenanes and knotted rings. Type II topoisomerases break and join 2 DNA strands simultaneously in an ATP-dependent manner. The protein is DNA gyrase subunit A of Staphylococcus aureus (strain MRSA252).